A 383-amino-acid polypeptide reads, in one-letter code: tRNA-specific 2-thiouridylase MnmA (383 aa).

Residues 31–38 and leucine 57 contribute to the ATP site; that span reads GLSGGVDS. The Nucleophile role is filled by cysteine 118. Residues cysteine 118 and cysteine 217 are joined by a disulfide bond. Glycine 143 is an ATP binding site. The interaction with tRNA stretch occupies residues 167–169; the sequence is KDQ. The active-site Cysteine persulfide intermediate is cysteine 217. The tract at residues 322 to 323 is interaction with tRNA; the sequence is RY.

This sequence belongs to the MnmA/TRMU family.

The protein localises to the cytoplasm. It catalyses the reaction S-sulfanyl-L-cysteinyl-[protein] + uridine(34) in tRNA + AH2 + ATP = 2-thiouridine(34) in tRNA + L-cysteinyl-[protein] + A + AMP + diphosphate + H(+). Catalyzes the 2-thiolation of uridine at the wobble position (U34) of tRNA, leading to the formation of s(2)U34. The protein is tRNA-specific 2-thiouridylase MnmA of Synechococcus sp. (strain RCC307).